The sequence spans 109 residues: Protein GOLVEN 5 (109 aa).

The N-terminal stretch at 1–24 (MTNITSSFLCLLILLLFCLSFGYS) is a signal peptide. The propeptide occupies 25–96 (LHGDKDEVLS…EEDDLVAYTA (72 aa)). The interval 54-88 (KKAQVRGRSGQEFSKETTKMMMKKTTKKETNVEEE) is disordered. Sulfotyrosine is present on Tyr98. A Hydroxyproline modification is found at Pro106.

Belongs to the RGF family. Binds to LRR receptor-like serine/threonine-protein kinases RGI1, RGI2 and RGI3 to trigger their dimerization with SERK proteins and subsequent signaling. In terms of tissue distribution, expressed in root tips.

Its subcellular location is the secreted. Signaling peptide (root growth factor) that maintains the postembryonic root stem cell niche in a PIN2-traffic dependent manner. Root growth factor that regulates the pattern of root growth and lateral root development by modulating the length and the number of cortical cells in the root apical meristem (RAM), and the anticlinal asymmetric cell divisions in lateral root initiation cells. Influences the longitudinal growth rate in the primary root in response to phosphate ion (Pi)-deprivation. The polypeptide is Protein GOLVEN 5 (Arabidopsis thaliana (Mouse-ear cress)).